A 160-amino-acid polypeptide reads, in one-letter code: Transcriptional repressor NrdR (160 aa).

A zinc finger lies at 3–34 (CPYCQYEDTQVKDSRPAEEGAVIRRRRVCSVC). An ATP-cone domain is found at 49-139 (LLITKKNGRC…VYRDFRNASD (91 aa)).

It belongs to the NrdR family. Zn(2+) is required as a cofactor.

In terms of biological role, negatively regulates transcription of bacterial ribonucleotide reductase nrd genes and operons by binding to NrdR-boxes. The protein is Transcriptional repressor NrdR of Bartonella tribocorum (strain CIP 105476 / IBS 506).